The primary structure comprises 383 residues: Succinyl-diaminopimelate desuccinylase (383 aa).

Position 72 (H72) interacts with Zn(2+). The active site involves D74. Residue D105 participates in Zn(2+) binding. Catalysis depends on E139, which acts as the Proton acceptor. Positions 140, 168, and 356 each coordinate Zn(2+).

It belongs to the peptidase M20A family. DapE subfamily. As to quaternary structure, homodimer. Requires Zn(2+) as cofactor. The cofactor is Co(2+).

The enzyme catalyses N-succinyl-(2S,6S)-2,6-diaminopimelate + H2O = (2S,6S)-2,6-diaminopimelate + succinate. It functions in the pathway amino-acid biosynthesis; L-lysine biosynthesis via DAP pathway; LL-2,6-diaminopimelate from (S)-tetrahydrodipicolinate (succinylase route): step 3/3. Its function is as follows. Catalyzes the hydrolysis of N-succinyl-L,L-diaminopimelic acid (SDAP), forming succinate and LL-2,6-diaminopimelate (DAP), an intermediate involved in the bacterial biosynthesis of lysine and meso-diaminopimelic acid, an essential component of bacterial cell walls. The protein is Succinyl-diaminopimelate desuccinylase of Beijerinckia indica subsp. indica (strain ATCC 9039 / DSM 1715 / NCIMB 8712).